Reading from the N-terminus, the 355-residue chain is Endonuclease III homolog (355 aa).

The Nuclear localization signal motif lies at 44-50 (PKKFRFQ). In terms of domain architecture, HhH spans 122–149 (FQGDIPDTVEDLMTLPGVGPKMGYLCMS). Lys142 acts as the Nucleophile; for N-glycosylase activity in catalysis. Residues Cys210, Cys217, Cys220, and Cys228 each coordinate [4Fe-4S] cluster. A Nuclear localization signal motif is present at residues 252–255 (KKRP). The segment at 303 to 355 (KEPAADIDVDQKPPVAFHSTTKETRSLRRSKRVAKKSSQYFSQQSLQDIEDLV) is disordered. Positions 338-349 (KSSQYFSQQSLQ) are enriched in polar residues.

It belongs to the Nth/MutY family. It depends on [4Fe-4S] cluster as a cofactor.

It is found in the nucleus. It localises to the mitochondrion. It catalyses the reaction 2'-deoxyribonucleotide-(2'-deoxyribose 5'-phosphate)-2'-deoxyribonucleotide-DNA = a 3'-end 2'-deoxyribonucleotide-(2,3-dehydro-2,3-deoxyribose 5'-phosphate)-DNA + a 5'-end 5'-phospho-2'-deoxyribonucleoside-DNA + H(+). In terms of biological role, bifunctional DNA N-glycosylase with associated apurinic/apyrimidinic (AP) lyase function that catalyzes the first step in base excision repair (BER), the primary repair pathway for the repair of oxidative DNA damage. The DNA N-glycosylase activity releases the damaged DNA base from DNA by cleaving the N-glycosidic bond, leaving an AP site. The AP-lyase activity cleaves the phosphodiester bond 3' to the AP site by a beta-elimination. Primarily recognizes and repairs oxidative base damage of pyrimidines. Also has 8-oxo-7,8-dihydroguanine (8-oxoG) DNA glycosylase activity. Also involved in the repair of 7-methylguanine lesions, although it cannot directly repair alkylated DNA bases. Probably does so via excision of methylformamidopyrimidine (mFapy) lesions, a spontaneous processing product of 7-methylguanine. The sequence is that of Endonuclease III homolog (nth1) from Schizosaccharomyces pombe (strain 972 / ATCC 24843) (Fission yeast).